Consider the following 185-residue polypeptide: Peptidyl-tRNA hydrolase (185 aa).

TRNA is bound at residue Y14. The active-site Proton acceptor is the H19. TRNA is bound by residues F64, N66, and N112.

It belongs to the PTH family. As to quaternary structure, monomer.

The protein resides in the cytoplasm. The catalysed reaction is an N-acyl-L-alpha-aminoacyl-tRNA + H2O = an N-acyl-L-amino acid + a tRNA + H(+). In terms of biological role, hydrolyzes ribosome-free peptidyl-tRNAs (with 1 or more amino acids incorporated), which drop off the ribosome during protein synthesis, or as a result of ribosome stalling. Catalyzes the release of premature peptidyl moieties from peptidyl-tRNA molecules trapped in stalled 50S ribosomal subunits, and thus maintains levels of free tRNAs and 50S ribosomes. In Halalkalibacterium halodurans (strain ATCC BAA-125 / DSM 18197 / FERM 7344 / JCM 9153 / C-125) (Bacillus halodurans), this protein is Peptidyl-tRNA hydrolase.